Consider the following 231-residue polypeptide: Proteasome subunit alpha type-2 (231 aa).

It belongs to the peptidase T1A family. The 26S proteasome consists of a 20S proteasome core and two 19S regulatory subunits. The 20S proteasome core is composed of 28 subunits that are arranged in four stacked rings, resulting in a barrel-shaped structure. The two end rings are each formed by seven alpha subunits, and the two central rings are each formed by seven beta subunits. The catalytic chamber with the active sites is on the inside of the barrel.

The protein resides in the cytoplasm. The protein localises to the nucleus. Functionally, the proteasome is a multicatalytic proteinase complex which is characterized by its ability to cleave peptides with Arg, Phe, Tyr, Leu, and Glu adjacent to the leaving group at neutral or slightly basic pH. The proteasome has an ATP-dependent proteolytic activity. The sequence is that of Proteasome subunit alpha type-2 (pas-2) from Caenorhabditis elegans.